Here is a 413-residue protein sequence, read N- to C-terminus: Cell division protein FtsA (413 aa).

This sequence belongs to the FtsA/MreB family. In terms of assembly, self-interacts. Interacts with FtsZ.

Its subcellular location is the cell inner membrane. Cell division protein that is involved in the assembly of the Z ring. May serve as a membrane anchor for the Z ring. The sequence is that of Cell division protein FtsA from Borreliella burgdorferi (strain ATCC 35210 / DSM 4680 / CIP 102532 / B31) (Borrelia burgdorferi).